A 251-amino-acid chain; its full sequence is Hydroxyacylglutathione hydrolase (251 aa).

Zn(2+) contacts are provided by H53, H55, D57, H58, H110, D127, and H165.

The protein belongs to the metallo-beta-lactamase superfamily. Glyoxalase II family. In terms of assembly, monomer. It depends on Zn(2+) as a cofactor.

It catalyses the reaction an S-(2-hydroxyacyl)glutathione + H2O = a 2-hydroxy carboxylate + glutathione + H(+). It participates in secondary metabolite metabolism; methylglyoxal degradation; (R)-lactate from methylglyoxal: step 2/2. Its function is as follows. Thiolesterase that catalyzes the hydrolysis of S-D-lactoyl-glutathione to form glutathione and D-lactic acid. The polypeptide is Hydroxyacylglutathione hydrolase (Yersinia pestis (strain Pestoides F)).